A 163-amino-acid polypeptide reads, in one-letter code: Putative pre-16S rRNA nuclease (163 aa).

This sequence belongs to the YqgF nuclease family.

It is found in the cytoplasm. Its function is as follows. Could be a nuclease involved in processing of the 5'-end of pre-16S rRNA. This is Putative pre-16S rRNA nuclease from Roseobacter denitrificans (strain ATCC 33942 / OCh 114) (Erythrobacter sp. (strain OCh 114)).